The primary structure comprises 652 residues: Trypanothione synthetase (652 aa).

The Peptidase C51 domain maps to 34-174 (SNKHDHFFSG…QHKDGVWTII (141 aa)). 328–330 (RFD) contributes to the ATP binding site. Mg(2+) contacts are provided by Asp-330, Glu-344, and Asn-346. ATP-binding positions include Lys-513, Lys-548, Gly-555, Gln-583, and 618–620 (IIT).

It in the C-terminal section; belongs to the glutathionylspermidine synthase preATP-grasp family. Mg(2+) serves as cofactor. Post-translationally, the N-terminus is blocked.

The catalysed reaction is spermidine + glutathione + ATP = glutathionylspermidine + ADP + phosphate + H(+). The enzyme catalyses glutathionylspermidine + glutathione + ATP = trypanothione + ADP + phosphate + H(+). Its function is as follows. Conjugates glutathione (gamma-Glu-Cys-Gly) and glutathionylspermidine to form trypanothione (N(1),N(8)-bis(glutathionyl)spermidine), which is involved in maintaining intracellular thiol redox and in defense against oxidants. This is Trypanothione synthetase (TRS) from Crithidia fasciculata.